The chain runs to 359 residues: Fructose-like permease IIC component 2 (359 aa).

One can recognise a PTS EIIC type-2 domain in the interval 11–344 (TRQHLMTGVS…KSLARKNGSS (334 aa)). 9 helical membrane-spanning segments follow: residues 19-39 (VSHMIPFVVSGGILLAVSVML), 60-80 (IGVAGLTLMVPFLAAYIGYSI), 99-119 (FGAGFFGALIAGIIGGIVVHY), 135-155 (IFIIPIVGTLITAGIMMWGLG), 176-196 (SIVMLAVIMGLMLAFDMGGPV), 216-236 (VAIAAVGICIPPLGMGLATLI), 251-271 (AALVMGCVGVTEGAIPFAAAD), 290-310 (AALVGAQCYAGWGGLIVLPVV), and 314-334 (LGYIAAVAVGAVVTAVCVNVL).

It is found in the cell inner membrane. In terms of biological role, the phosphoenolpyruvate-dependent sugar phosphotransferase system (PTS), a major carbohydrate active -transport system, catalyzes the phosphorylation of incoming sugar substrates concomitant with their translocation across the cell membrane. This is Fructose-like permease IIC component 2 (frwC) from Escherichia coli (strain K12).